Consider the following 65-residue polypeptide: Large ribosomal subunit protein bL35 (65 aa).

It belongs to the bacterial ribosomal protein bL35 family.

The chain is Large ribosomal subunit protein bL35 from Blochmanniella pennsylvanica (strain BPEN).